The following is a 237-amino-acid chain: Nodulation protein NolA (237 aa).

The region spanning 10–79 (RWRIGELAEA…LVEIRKAMEG (70 aa)) is the HTH merR-type domain. A DNA-binding region (H-T-H motif) is located at residues 13–32 (IGELAEATGVTVRTLHHYEH).

In terms of biological role, involved in genotype-specific nodulation of soybeans. This chain is Nodulation protein NolA (nolA), found in Bradyrhizobium diazoefficiens (strain JCM 10833 / BCRC 13528 / IAM 13628 / NBRC 14792 / USDA 110).